The chain runs to 156 residues: Protein-export protein SecB (156 aa).

This sequence belongs to the SecB family. Homotetramer, a dimer of dimers. One homotetramer interacts with 1 SecA dimer.

The protein resides in the cytoplasm. Its function is as follows. One of the proteins required for the normal export of preproteins out of the cell cytoplasm. It is a molecular chaperone that binds to a subset of precursor proteins, maintaining them in a translocation-competent state. It also specifically binds to its receptor SecA. The chain is Protein-export protein SecB from Paraburkholderia xenovorans (strain LB400).